Here is a 236-residue protein sequence, read N- to C-terminus: ATP synthase subunit a (236 aa).

Helical transmembrane passes span 17 to 37, 80 to 100, 114 to 134, 179 to 199, and 208 to 228; these read LANV…AVLA, MTLI…SVVI, VVTL…GIKL, ILLA…IAAI, and FSIF…MVYM.

It belongs to the ATPase A chain family. F-type ATPases have 2 components, CF(1) - the catalytic core - and CF(0) - the membrane proton channel. CF(1) has five subunits: alpha(3), beta(3), gamma(1), delta(1), epsilon(1). CF(0) has three main subunits: a(1), b(2) and c(9-12). The alpha and beta chains form an alternating ring which encloses part of the gamma chain. CF(1) is attached to CF(0) by a central stalk formed by the gamma and epsilon chains, while a peripheral stalk is formed by the delta and b chains.

Its subcellular location is the cell membrane. In terms of biological role, key component of the proton channel; it plays a direct role in the translocation of protons across the membrane. The sequence is that of ATP synthase subunit a from Anoxybacillus flavithermus (strain DSM 21510 / WK1).